A 391-amino-acid polypeptide reads, in one-letter code: GTPase HflX (391 aa).

The tract at residues 162–181 is disordered; that stretch reads LAQQRGGAKGTRGASRGAGE. Residues 222–391 enclose the Hflx-type G domain; sequence KIGAIVGYTN…KITDIIIFDK (170 aa). GTP contacts are provided by residues 228–235, 253–257, 278–281, 344–347, and 369–371; these read GYTNAGKS, FATLD, DTVG, NKMD, and SVT. Positions 235 and 255 each coordinate Mg(2+).

This sequence belongs to the TRAFAC class OBG-HflX-like GTPase superfamily. HflX GTPase family. Monomer. Associates with the 50S ribosomal subunit. Mg(2+) serves as cofactor.

The protein resides in the cytoplasm. GTPase that associates with the 50S ribosomal subunit and may have a role during protein synthesis or ribosome biogenesis. The chain is GTPase HflX from Treponema denticola (strain ATCC 35405 / DSM 14222 / CIP 103919 / JCM 8153 / KCTC 15104).